The sequence spans 222 residues: Dual specificity phosphatase 29 (222 aa).

Positions 54-202 constitute a Tyrosine-protein phosphatase domain; it reads HVNEVWPKLY…LRELDKQLVQ (149 aa). Position 146-153 (146-153) interacts with substrate; the sequence is HCAMGRSR. Cysteine 147 serves as the catalytic Phosphocysteine intermediate. A disordered region spans residues 201–222; sequence VQQRRGAQHRGEAGEKAGEKEP. Basic and acidic residues predominate over residues 209–222; that stretch reads HRGEAGEKAGEKEP.

The protein belongs to the protein-tyrosine phosphatase family. Non-receptor class dual specificity subfamily. As to quaternary structure, homodimer. Interacts with PRKAA2.

It localises to the cytoplasm. The protein localises to the nucleus. The catalysed reaction is O-phospho-L-tyrosyl-[protein] + H2O = L-tyrosyl-[protein] + phosphate. The enzyme catalyses O-phospho-L-seryl-[protein] + H2O = L-seryl-[protein] + phosphate. It catalyses the reaction O-phospho-L-threonyl-[protein] + H2O = L-threonyl-[protein] + phosphate. In terms of biological role, dual specificity phosphatase able to dephosphorylate phosphotyrosine, phosphoserine and phosphothreonine residues within the same substrate, with a preference for phosphotyrosine as a substrate. Involved in the modulation of intracellular signaling cascades. In skeletal muscle regulates systemic glucose homeostasis by activating, AMPK, an energy sensor protein kinase. Affects MAP kinase signaling though modulation of the MAPK1/2 cascade in skeletal muscle promoting muscle cell differentiation, development and atrophy. The protein is Dual specificity phosphatase 29 (DUSP29) of Sus scrofa (Pig).